The primary structure comprises 174 residues: Shikimate kinase (174 aa).

14 to 19 (GAGKST) serves as a coordination point for ATP. Ser18 is a Mg(2+) binding site. Substrate contacts are provided by Asp36, Arg60, and Gly82. Residue Arg120 coordinates ATP. Residue Arg141 participates in substrate binding. Residue Arg158 coordinates ATP.

This sequence belongs to the shikimate kinase family. In terms of assembly, monomer. It depends on Mg(2+) as a cofactor.

It is found in the cytoplasm. The enzyme catalyses shikimate + ATP = 3-phosphoshikimate + ADP + H(+). It participates in metabolic intermediate biosynthesis; chorismate biosynthesis; chorismate from D-erythrose 4-phosphate and phosphoenolpyruvate: step 5/7. Its function is as follows. Catalyzes the specific phosphorylation of the 3-hydroxyl group of shikimic acid using ATP as a cosubstrate. This chain is Shikimate kinase, found in Buchnera aphidicola subsp. Baizongia pistaciae (strain Bp).